We begin with the raw amino-acid sequence, 86 residues long: Cell division topological specificity factor (86 aa).

Belongs to the MinE family.

Functionally, prevents the cell division inhibition by proteins MinC and MinD at internal division sites while permitting inhibition at polar sites. This ensures cell division at the proper site by restricting the formation of a division septum at the midpoint of the long axis of the cell. This chain is Cell division topological specificity factor, found in Polaromonas sp. (strain JS666 / ATCC BAA-500).